A 369-amino-acid chain; its full sequence is Probable dual-specificity RNA methyltransferase RlmN (369 aa).

The active-site Proton acceptor is the glutamate 108. Residues 114–351 form the Radical SAM core domain; the sequence is YPDRATLCIS…LAQGVSCTVR (238 aa). The cysteines at positions 121 and 362 are disulfide-linked. [4Fe-4S] cluster is bound by residues cysteine 128, cysteine 132, and cysteine 135. Residues 183–184, serine 217, 240–242, and asparagine 319 contribute to the S-adenosyl-L-methionine site; these read GE and SLH. The active-site S-methylcysteine intermediate is cysteine 362.

It belongs to the radical SAM superfamily. RlmN family. It depends on [4Fe-4S] cluster as a cofactor.

Its subcellular location is the cytoplasm. It carries out the reaction adenosine(2503) in 23S rRNA + 2 reduced [2Fe-2S]-[ferredoxin] + 2 S-adenosyl-L-methionine = 2-methyladenosine(2503) in 23S rRNA + 5'-deoxyadenosine + L-methionine + 2 oxidized [2Fe-2S]-[ferredoxin] + S-adenosyl-L-homocysteine. The catalysed reaction is adenosine(37) in tRNA + 2 reduced [2Fe-2S]-[ferredoxin] + 2 S-adenosyl-L-methionine = 2-methyladenosine(37) in tRNA + 5'-deoxyadenosine + L-methionine + 2 oxidized [2Fe-2S]-[ferredoxin] + S-adenosyl-L-homocysteine. In terms of biological role, specifically methylates position 2 of adenine 2503 in 23S rRNA and position 2 of adenine 37 in tRNAs. This is Probable dual-specificity RNA methyltransferase RlmN from Rhodococcus jostii (strain RHA1).